A 299-amino-acid chain; its full sequence is Probable lipid kinase YegS-like (299 aa).

A DAGKc domain is found at 2 to 133; sequence ATFPASLLIL…IDIAQVNDKT (132 aa). ATP contacts are provided by residues T40, 66–72, and T95; that span reads GDGTINE. The Mg(2+) site is built by L215, D218, and L220. Catalysis depends on E271, which acts as the Proton acceptor.

Belongs to the diacylglycerol/lipid kinase family. YegS lipid kinase subfamily. Requires Mg(2+) as cofactor. Ca(2+) is required as a cofactor.

The protein localises to the cytoplasm. Probably phosphorylates lipids; the in vivo substrate is unknown. The sequence is that of Probable lipid kinase YegS-like from Citrobacter koseri (strain ATCC BAA-895 / CDC 4225-83 / SGSC4696).